Here is a 337-residue protein sequence, read N- to C-terminus: DNA-directed RNA polymerase subunit alpha (337 aa).

Residues 1–233 are alpha N-terminal domain (alpha-NTD); it reads MVREKVKVST…NLFIPFLHVE (233 aa). Residues 267–337 form an alpha C-terminal domain (alpha-CTD) region; the sequence is LAFQYIFIDQ…IEKAFQKKID (71 aa).

Belongs to the RNA polymerase alpha chain family. As to quaternary structure, in plastids the minimal PEP RNA polymerase catalytic core is composed of four subunits: alpha, beta, beta', and beta''. When a (nuclear-encoded) sigma factor is associated with the core the holoenzyme is formed, which can initiate transcription.

The protein resides in the plastid. Its subcellular location is the chloroplast. It carries out the reaction RNA(n) + a ribonucleoside 5'-triphosphate = RNA(n+1) + diphosphate. Functionally, DNA-dependent RNA polymerase catalyzes the transcription of DNA into RNA using the four ribonucleoside triphosphates as substrates. The sequence is that of DNA-directed RNA polymerase subunit alpha from Arabis hirsuta (Hairy rock-cress).